We begin with the raw amino-acid sequence, 87 residues long: uncharacterized protein (87 aa).

Residues 52 to 87 (KWQPRPDANNSDTTTSTEDSTTDTETEYSTTEDELA) are disordered. Residues 71–87 (STTDTETEYSTTEDELA) are compositionally biased toward acidic residues.

This is an uncharacterized protein from Autographa californica nuclear polyhedrosis virus (AcMNPV).